Reading from the N-terminus, the 136-residue chain is Large ribosomal subunit protein uL16c (136 aa).

It belongs to the universal ribosomal protein uL16 family. Part of the 50S ribosomal subunit.

The protein localises to the plastid. The protein resides in the chloroplast. The chain is Large ribosomal subunit protein uL16c from Zea mays (Maize).